The sequence spans 691 residues: Methionine--tRNA ligase (691 aa).

The short motif at 15–25 (PYTNGPIHIGH) is the 'HIGH' region element. Residues C147, C150, C160, and C163 each contribute to the Zn(2+) site. The short motif at 336–340 (KLSTS) is the 'KMSKS' region element. An ATP-binding site is contributed by T339. The region spanning 589–691 (DFTKMDLRVG…DGVKAGTTIN (103 aa)) is the tRNA-binding domain.

This sequence belongs to the class-I aminoacyl-tRNA synthetase family. MetG type 1 subfamily. In terms of assembly, homodimer. Requires Zn(2+) as cofactor.

It is found in the cytoplasm. It carries out the reaction tRNA(Met) + L-methionine + ATP = L-methionyl-tRNA(Met) + AMP + diphosphate. Is required not only for elongation of protein synthesis but also for the initiation of all mRNA translation through initiator tRNA(fMet) aminoacylation. The chain is Methionine--tRNA ligase from Christiangramia forsetii (strain DSM 17595 / CGMCC 1.15422 / KT0803) (Gramella forsetii).